Reading from the N-terminus, the 298-residue chain is Cyclin-dependent kinase 2 (298 aa).

Methionine 1 is modified (N-acetylmethionine). The Protein kinase domain maps to 4 to 286; sequence FQKVEKIGEG…AKAALAHPFF (283 aa). Lysine 6 carries the post-translational modification N6-acetyllysine. An ATP-binding site is contributed by 10–18; the sequence is IGEGTYGVV. Threonine 14 is modified (phosphothreonine). Phosphotyrosine; by WEE1 is present on tyrosine 15. Residue tyrosine 19 is modified to Phosphotyrosine. ATP contacts are provided by residues lysine 33, 81–83, and aspartate 86; that span reads EFL. The active-site Proton acceptor is aspartate 127. ATP is bound by residues 129-132 and aspartate 145; that span reads KPQN. Mg(2+) contacts are provided by asparagine 132 and aspartate 145. Phosphothreonine; by CAK and CCRK is present on threonine 160.

The protein belongs to the protein kinase superfamily. CMGC Ser/Thr protein kinase family. CDC2/CDKX subfamily. As to quaternary structure, found in a complex with CABLES1, CCNA1 and CCNE1. Interacts with CABLES1. Interacts with UHRF2. Part of a complex consisting of UHRF2, CDK2 and CCNE1. Interacts with the Speedy/Ringo proteins SPDYA and SPDYC. Interaction with SPDYA promotes kinase activation via a conformation change that alleviates obstruction of the substrate-binding cleft by the T-loop. Found in a complex with both SPDYA and CDKN1B/KIP1. Binds to RB1 and CDK7. Binding to CDKN1A (p21) leads to CDK2/cyclin E inactivation at the G1-S phase DNA damage checkpoint, thereby arresting cells at the G1-S transition during DNA repair. Associated with PTPN6 and beta-catenin/CTNNB1. Interacts with CACUL1. May interact with CEP63. Interacts with ANKRD17. Interacts with CEBPA (when phosphorylated). Forms a ternary complex with CCNA2 and CDKN1B; CDKN1B inhibits the kinase activity of CDK2 through conformational rearrangements. Interacts with cyclins A, B1, B3, D, or E. Interacts with CDK2AP2. Requires Mg(2+) as cofactor. Phosphorylated at Thr-160 by CDK7 in a CAK complex. Phosphorylation at Thr-160 promotes kinase activity, whereas phosphorylation at Tyr-15 by WEE1 reduces slightly kinase activity. Phosphorylated on Thr-14 and Tyr-15 during S and G2 phases before being dephosphorylated by CDC25A. In terms of processing, nitrosylated after treatment with nitric oxide (DETA-NO).

Its subcellular location is the cytoplasm. It localises to the cytoskeleton. The protein localises to the microtubule organizing center. The protein resides in the centrosome. It is found in the nucleus. Its subcellular location is the cajal body. It localises to the endosome. The catalysed reaction is L-seryl-[protein] + ATP = O-phospho-L-seryl-[protein] + ADP + H(+). The enzyme catalyses L-threonyl-[protein] + ATP = O-phospho-L-threonyl-[protein] + ADP + H(+). Its activity is regulated as follows. Phosphorylation at Thr-14 or Tyr-15 inactivates the enzyme, while phosphorylation at Thr-160 activates it. Inhibited by 1,25-dihydroxyvitamin D(3) (1,25-(OH)(2)D(3)), AG-024322, N-(4-Piperidinyl)-4-(2,6-dichlorobenzoylamino)-1H-pyrazole-3-carboxamide (AT7519), R547 (Ro-4584820), purine, pyrimidine and pyridine derivatives, 2-aminopyrimidines, paullones, thiazo derivatives, macrocyclic quinoxalin-2-one, pyrazolo[1,5-a]-1,3,5-triazine, pyrazolo[1,5-a]pyrimidine, 2-(1-ethyl-2-hydroxyethylamino)-6-benzylamino-9-isopropylpurine (roscovitine, seliciclib and CYC202), SNS-032 (BMS-387032), triazolo[1,5-a]pyrimidines, staurosporine and olomoucine. Stimulated by MYC. Inactivated by CDKN1A (p21). Functionally, serine/threonine-protein kinase involved in the control of the cell cycle; essential for meiosis, but dispensable for mitosis. Phosphorylates CABLES1, CTNNB1, CDK2AP2, ERCC6, NBN, USP37, p53/TP53, NPM1, CDK7, RB1, BRCA2, MYC, NPAT, EZH2. Triggers duplication of centrosomes and DNA. Acts at the G1-S transition to promote the E2F transcriptional program and the initiation of DNA synthesis, and modulates G2 progression; controls the timing of entry into mitosis/meiosis by controlling the subsequent activation of cyclin B/CDK1 by phosphorylation, and coordinates the activation of cyclin B/CDK1 at the centrosome and in the nucleus. Crucial role in orchestrating a fine balance between cellular proliferation, cell death, and DNA repair in embryonic stem cells (ESCs). Activity of CDK2 is maximal during S phase and G2; activated by interaction with cyclin E during the early stages of DNA synthesis to permit G1-S transition, and subsequently activated by cyclin A2 (cyclin A1 in germ cells) during the late stages of DNA replication to drive the transition from S phase to mitosis, the G2 phase. EZH2 phosphorylation promotes H3K27me3 maintenance and epigenetic gene silencing. Cyclin E/CDK2 prevents oxidative stress-mediated Ras-induced senescence by phosphorylating MYC. Involved in G1-S phase DNA damage checkpoint that prevents cells with damaged DNA from initiating mitosis; regulates homologous recombination-dependent repair by phosphorylating BRCA2, this phosphorylation is low in S phase when recombination is active, but increases as cells progress towards mitosis. In response to DNA damage, double-strand break repair by homologous recombination a reduction of CDK2-mediated BRCA2 phosphorylation. Involved in regulation of telomere repair by mediating phosphorylation of NBN. Phosphorylation of RB1 disturbs its interaction with E2F1. NPM1 phosphorylation by cyclin E/CDK2 promotes its dissociates from unduplicated centrosomes, thus initiating centrosome duplication. Cyclin E/CDK2-mediated phosphorylation of NPAT at G1-S transition and until prophase stimulates the NPAT-mediated activation of histone gene transcription during S phase. Required for vitamin D-mediated growth inhibition by being itself inactivated. Involved in the nitric oxide- (NO) mediated signaling in a nitrosylation/activation-dependent manner. USP37 is activated by phosphorylation and thus triggers G1-S transition. CTNNB1 phosphorylation regulates insulin internalization. Phosphorylates FOXP3 and negatively regulates its transcriptional activity and protein stability. Phosphorylates ERCC6 which is essential for its chromatin remodeling activity at DNA double-strand breaks. Acts as a regulator of the phosphatidylinositol 3-kinase/protein kinase B signal transduction by mediating phosphorylation of the C-terminus of protein kinase B (PKB/AKT1 and PKB/AKT2), promoting its activation. This is Cyclin-dependent kinase 2 (CDK2) from Homo sapiens (Human).